The chain runs to 545 residues: CTP synthase (545 aa).

The tract at residues 1–266 (MATNYIFVTG…DDFVCERFRL (266 aa)) is amidoligase domain. Residue serine 14 participates in CTP binding. A UTP-binding site is contributed by serine 14. ATP-binding positions include 15–20 (SLGKGI) and aspartate 72. The Mg(2+) site is built by aspartate 72 and glutamate 140. Residues 147-149 (DIE), 187-192 (KTKPTQ), and lysine 223 contribute to the CTP site. UTP contacts are provided by residues 187–192 (KTKPTQ) and lysine 223. 239–241 (KDV) is an ATP binding site. In terms of domain architecture, Glutamine amidotransferase type-1 spans 291-542 (TIGMVGKYTE…VKAAYENHKK (252 aa)). Position 352 (glycine 352) interacts with L-glutamine. The active-site Nucleophile; for glutamine hydrolysis is the cysteine 379. Residues 380–383 (LGMQ), glutamate 403, and arginine 470 each bind L-glutamine. Catalysis depends on residues histidine 515 and glutamate 517.

Belongs to the CTP synthase family. In terms of assembly, homotetramer.

It catalyses the reaction UTP + L-glutamine + ATP + H2O = CTP + L-glutamate + ADP + phosphate + 2 H(+). It carries out the reaction L-glutamine + H2O = L-glutamate + NH4(+). The enzyme catalyses UTP + NH4(+) + ATP = CTP + ADP + phosphate + 2 H(+). Its pathway is pyrimidine metabolism; CTP biosynthesis via de novo pathway; CTP from UDP: step 2/2. Its activity is regulated as follows. Allosterically activated by GTP, when glutamine is the substrate; GTP has no effect on the reaction when ammonia is the substrate. The allosteric effector GTP functions by stabilizing the protein conformation that binds the tetrahedral intermediate(s) formed during glutamine hydrolysis. Inhibited by the product CTP, via allosteric rather than competitive inhibition. Catalyzes the ATP-dependent amination of UTP to CTP with either L-glutamine or ammonia as the source of nitrogen. Regulates intracellular CTP levels through interactions with the four ribonucleotide triphosphates. The polypeptide is CTP synthase (Haemophilus influenzae (strain PittGG)).